The primary structure comprises 272 residues: Hematopoietically-expressed homeobox protein hhex (272 aa).

Positions 137–196 form a DNA-binding region, homeobox; it reads RKGGQVRFSNDQTIELEKKFETQKYLSPPERKRLAKMLQLSERQVKTWFQNRRAKWRRLK. The tract at residues 222–272 is disordered; it reads CLSAEQKSRESSLDDPTSSPTSQGNLDSEVSDDSDQEVDIEGDKGYYNCAH. Residues 250–261 show a composition bias toward acidic residues; it reads EVSDDSDQEVDI.

In terms of tissue distribution, first expressed in the dorsal endomesoderm of the gastrula stage embryo. The dorsal endomesoderm contributes to forming the embryonic liver, and expression continues in the liver throughout development. Also expressed in precursors of the developing thyroid gland, and beginning at the tailbud stage, expressed in the ventral region of the head. Also transiently expressed in the endothelial layer of developing vascular tissues of the embryo, beginning at the tailbud stages.

Its subcellular location is the nucleus. Recognizes the DNA sequence 5'-ATTAA-3'. Transcriptional repressor. Regulates the differentiation of both endothelial and blood cells. Probably plays a role in the proliferation of vascular endothelial cells during blood vessel development. Establishes anterior identity at two levels; acts early to enhance canonical wnt-signaling by repressing expression of tle4, and acts later to inhibit nodal-signaling by directly targeting nodal/nr1 and nodal2/nr2. May play a role in liver development. Induces heart development. This is Hematopoietically-expressed homeobox protein hhex from Xenopus laevis (African clawed frog).